A 209-amino-acid polypeptide reads, in one-letter code: V-type ATP synthase subunit D (209 aa).

It belongs to the V-ATPase D subunit family.

Its function is as follows. Produces ATP from ADP in the presence of a proton gradient across the membrane. The protein is V-type ATP synthase subunit D of Anaeromyxobacter dehalogenans (strain 2CP-C).